The primary structure comprises 281 residues: Proteasome subunit beta (281 aa).

Positions 1–53 (MEANTRSTGRLPAAFLTPGSSSFMDFLSDHQPELLPGKRQLPPTQGVIEAPHG) are cleaved as a propeptide — removed in mature form; by autocatalysis. Catalysis depends on Thr54, which acts as the Nucleophile.

Belongs to the peptidase T1B family. The 20S proteasome core is composed of 14 alpha and 14 beta subunits that assemble into four stacked heptameric rings, resulting in a barrel-shaped structure. The two inner rings, each composed of seven catalytic beta subunits, are sandwiched by two outer rings, each composed of seven alpha subunits. The catalytic chamber with the active sites is on the inside of the barrel. Has a gated structure, the ends of the cylinder being occluded by the N-termini of the alpha-subunits. Is capped by the proteasome-associated ATPase, ARC.

It is found in the cytoplasm. It catalyses the reaction Cleavage of peptide bonds with very broad specificity.. It participates in protein degradation; proteasomal Pup-dependent pathway. The formation of the proteasomal ATPase ARC-20S proteasome complex, likely via the docking of the C-termini of ARC into the intersubunit pockets in the alpha-rings, may trigger opening of the gate for substrate entry. Interconversion between the open-gate and close-gate conformations leads to a dynamic regulation of the 20S proteasome proteolysis activity. Component of the proteasome core, a large protease complex with broad specificity involved in protein degradation. The chain is Proteasome subunit beta from Streptomyces scabiei (strain 87.22).